Consider the following 500-residue polypeptide: Probable cytosol aminopeptidase (500 aa).

Mn(2+) contacts are provided by K265 and D270. K277 is a catalytic residue. Mn(2+)-binding residues include D288, D347, and E349. R351 is a catalytic residue.

It belongs to the peptidase M17 family. Mn(2+) is required as a cofactor.

The protein resides in the cytoplasm. It catalyses the reaction Release of an N-terminal amino acid, Xaa-|-Yaa-, in which Xaa is preferably Leu, but may be other amino acids including Pro although not Arg or Lys, and Yaa may be Pro. Amino acid amides and methyl esters are also readily hydrolyzed, but rates on arylamides are exceedingly low.. The catalysed reaction is Release of an N-terminal amino acid, preferentially leucine, but not glutamic or aspartic acids.. Presumably involved in the processing and regular turnover of intracellular proteins. Catalyzes the removal of unsubstituted N-terminal amino acids from various peptides. In Corynebacterium diphtheriae (strain ATCC 700971 / NCTC 13129 / Biotype gravis), this protein is Probable cytosol aminopeptidase.